The sequence spans 1014 residues: Exportin-T (1014 aa).

It belongs to the exportin family.

The protein resides in the nucleus. It is found in the cytoplasm. Functionally, tRNA nucleus export receptor which facilitates tRNA translocation across the nuclear pore complex. Involved in pre-tRNA splicing, probably by affecting the interaction of pre-tRNA with splicing endonuclease. This Podospora anserina (strain S / ATCC MYA-4624 / DSM 980 / FGSC 10383) (Pleurage anserina) protein is Exportin-T (LOS1).